The chain runs to 590 residues: Ankyrin repeat domain-containing protein 13A (590 aa).

2 ANK repeats span residues 40–69 and 73–102; these read RGRTLLHLAVSLGHLESARVLLRHKADVTK and QGWTVLHEAVSTGDPEMVYTVLQHRDYHNT. At Ser205 the chain carries Phosphoserine. 4 UIM domains span residues 483–502, 519–538, 549–568, and 574–590; these read EDYEIMQFAIQQSLLESSRS, TYDAQYERAIQESLLTSTEG, RFDNDLQLAMELSAKELEEW, and EEEAELQQVLQLSLTDK. Residue Ser586 is modified to Phosphoserine.

In terms of assembly, interacts (via the UIM 3 and 4 repeats) with EGFR (ubiquitinated); the interaction is direct, inhibited by ANKRD13A monoubiquitination and may regulate EGFR internalization. In terms of processing, monoubiquitinated, inhibits interaction with ubiquitinated EGFR.

It localises to the cell membrane. The protein localises to the late endosome. Its function is as follows. Ubiquitin-binding protein that specifically recognizes and binds 'Lys-63'-linked ubiquitin. Does not bind 'Lys-48'-linked ubiquitin. Positively regulates the internalization of ligand-activated EGFR by binding to the Ub moiety of ubiquitinated EGFR at the cell membrane. This Homo sapiens (Human) protein is Ankyrin repeat domain-containing protein 13A (ANKRD13A).